The primary structure comprises 441 residues: Glutamate--tRNA ligase 2 (441 aa).

The 'HIGH' region motif lies at 8–18 (PSPTGYIHVGN). A 'KMSKS' region motif is present at residues 239 to 243 (ALSKR). ATP is bound at residue Lys242.

The protein belongs to the class-I aminoacyl-tRNA synthetase family. Glutamate--tRNA ligase type 1 subfamily. Monomer.

Its subcellular location is the cytoplasm. It catalyses the reaction tRNA(Glu) + L-glutamate + ATP = L-glutamyl-tRNA(Glu) + AMP + diphosphate. Functionally, catalyzes the attachment of glutamate to tRNA(Glu) in a two-step reaction: glutamate is first activated by ATP to form Glu-AMP and then transferred to the acceptor end of tRNA(Glu). The sequence is that of Glutamate--tRNA ligase 2 from Ruegeria sp. (strain TM1040) (Silicibacter sp.).